A 27-amino-acid polypeptide reads, in one-letter code: Nemertide alpha-8 (27 aa).

3 disulfide bridges follow: C2–C16, C9–C20, and C15–C26.

The protein belongs to the nemertide family. Confined to the epidermis and to the mucus layer.

The protein resides in the secreted. Highly potent toxin against both insect and some mammalian sodium channels (Nav). It potently inhibits inactivation of insect sodium channels of B.germanica (BgNav1) and also delays the inactivation of mammalian Nav with potent activity on Nav1.3/SCN3A and Nav1.4/SCN4A. 1 uM is enough to completely inhibits the inactivation, resulting in sustained non-inactivating currents. In addition, the toxin significantly enhances the recovery from inactivation, and the open state is not required for the toxin to interact with the channel. In vivo, injection into brine shrimp (Artemia salina) stops movement or causes death after 24 hours (EC(50)=0.4 uM). This Riseriellus occultus (Ribbon worm) protein is Nemertide alpha-8.